A 473-amino-acid chain; its full sequence is Flavin-dependent L-tryptophan oxidase RebO (473 aa).

The N-terminal stretch at 1–21 is a signal peptide; the sequence is MSRGHKKITVLGAGVAGLVAA. FAD contacts are provided by residues 15 to 16, 35 to 36, R43, 61 to 64, E444, and 451 to 456; these read VA, EG, GAMR, and AWIDGA.

It belongs to the flavin monoamine oxidase family. RebO subfamily. In terms of assembly, homodimer. Requires FAD as cofactor.

The catalysed reaction is 7-chloro-L-tryptophan + O2 = 3-(7-chloroindol-3-yl)-2-iminopropanoate + H2O2. It catalyses the reaction L-tryptophan + O2 = 2-iminio-3-(indol-3-yl)propanoate + H2O2. Involved in the biosynthesis of the indolocarbazole antitumor agent rebeccamycin. It generates the imine form of 7-chloroindole 3-pyruvate (7Cl-IPA) from 7-chloro-L-tryptophan (7Cl-Trp), with concomitant two-electron reduction of O(2) to H(2)O(2). The enzyme is also active with L-tryptophan as substrate. The polypeptide is Flavin-dependent L-tryptophan oxidase RebO (rebO) (Lentzea aerocolonigenes (Lechevalieria aerocolonigenes)).